A 199-amino-acid polypeptide reads, in one-letter code: RNA-free ribonuclease P (199 aa).

Belongs to the HARP family.

The enzyme catalyses Endonucleolytic cleavage of RNA, removing 5'-extranucleotides from tRNA precursor.. Its function is as follows. RNA-free RNase P that catalyzes the removal of the 5'-leader sequence from pre-tRNA to produce the mature 5'-terminus. The protein is RNA-free ribonuclease P of Thermococcus onnurineus (strain NA1).